A 479-amino-acid chain; its full sequence is Chromosomal replication initiator protein DnaA (479 aa).

A domain I, interacts with DnaA modulators region spans residues 1–71 (MNLTQIWKAT…RNALARVVGY (71 aa)). The interval 71–138 (YPVQVQVLIA…LDLASAMRSG (68 aa)) is domain II. The span at 86-99 (TEPSPSLTLSNGSR) shows a compositional bias: polar residues. Residues 86–106 (TEPSPSLTLSNGSRLMSDPEP) form a disordered region. Residues 139–355 (MLNPRYTFSS…GSLNRVAAYA (217 aa)) are domain III, AAA+ region. Residues glycine 183, glycine 185, lysine 186, and threonine 187 each coordinate ATP. The tract at residues 356 to 479 (ELNRAPITIE…IRERIQMLRG (124 aa)) is domain IV, binds dsDNA.

This sequence belongs to the DnaA family. As to quaternary structure, oligomerizes as a right-handed, spiral filament on DNA at oriC.

The protein localises to the cytoplasm. Its function is as follows. Plays an essential role in the initiation and regulation of chromosomal replication. ATP-DnaA binds to the origin of replication (oriC) to initiate formation of the DNA replication initiation complex once per cell cycle. Binds the DnaA box (a 9 base pair repeat at the origin) and separates the double-stranded (ds)DNA. Forms a right-handed helical filament on oriC DNA; dsDNA binds to the exterior of the filament while single-stranded (ss)DNA is stabiized in the filament's interior. The ATP-DnaA-oriC complex binds and stabilizes one strand of the AT-rich DNA unwinding element (DUE), permitting loading of DNA polymerase. After initiation quickly degrades to an ADP-DnaA complex that is not apt for DNA replication. Binds acidic phospholipids. This Chloroflexus aurantiacus (strain ATCC 29366 / DSM 635 / J-10-fl) protein is Chromosomal replication initiator protein DnaA.